A 182-amino-acid polypeptide reads, in one-letter code: Phospholipase A2 inhibitor gamma subunit A (182 aa).

8 disulfides stabilise this stretch: C3–C27, C6–C13, C20–C48, C54–C75, C76–C81, C99–C124, C117–C146, and C150–C172. An N-linked (GlcNAc...) asparagine glycan is attached at N157.

It belongs to the CNF-like-inhibitor family. As to quaternary structure, heterotrimer of 2 subunits A and 1 subunit B. N-glycosylation is not important for activity, since deglycosylation does not change its PLA2 inhibitory activity. Expressed by the liver.

It is found in the secreted. Its function is as follows. Strongly inhibits its own venom PLA2 and all other PLA2s tested including Elapid, Crotalid and Viperid venom PLA2s, as well as honeybee PLA2s. In Laticauda semifasciata (Black-banded sea krait), this protein is Phospholipase A2 inhibitor gamma subunit A.